The sequence spans 125 residues: Large-conductance mechanosensitive channel (125 aa).

Transmembrane regions (helical) follow at residues valine 19–isoleucine 39, leucine 42–alanine 62, and glycine 67–valine 87.

It belongs to the MscL family. As to quaternary structure, homopentamer.

It is found in the cell membrane. In terms of biological role, channel that opens in response to stretch forces in the membrane lipid bilayer. May participate in the regulation of osmotic pressure changes within the cell. The polypeptide is Large-conductance mechanosensitive channel (Limosilactobacillus fermentum (strain NBRC 3956 / LMG 18251) (Lactobacillus fermentum)).